The primary structure comprises 138 residues: Transcription antitermination protein NusB (138 aa).

This sequence belongs to the NusB family.

In terms of biological role, involved in transcription antitermination. Required for transcription of ribosomal RNA (rRNA) genes. Binds specifically to the boxA antiterminator sequence of the ribosomal RNA (rrn) operons. In Helicobacter pylori (strain ATCC 700392 / 26695) (Campylobacter pylori), this protein is Transcription antitermination protein NusB.